A 384-amino-acid polypeptide reads, in one-letter code: Large ribosomal subunit protein uL3m (384 aa).

Disordered regions lie at residues 80–101 and 237–262; these read NQVTQGLPAPTSGPAAALKRRE and QEASHGNSLNHRTIGSVGGSQGSGSR. Positions 240–249 are enriched in polar residues; the sequence is SHGNSLNHRT.

It belongs to the universal ribosomal protein uL3 family. As to quaternary structure, component of the mitochondrial large ribosomal subunit (mt-LSU). Mature N.crassa 74S mitochondrial ribosomes consist of a small (37S) and a large (54S) subunit. The 37S small subunit contains a 16S ribosomal RNA (16S mt-rRNA) and 32 different proteins. The 54S large subunit contains a 23S rRNA (23S mt-rRNA) and 42 different proteins.

The protein resides in the mitochondrion. Component of the mitochondrial ribosome (mitoribosome), a dedicated translation machinery responsible for the synthesis of mitochondrial genome-encoded proteins, including at least some of the essential transmembrane subunits of the mitochondrial respiratory chain. The mitoribosomes are attached to the mitochondrial inner membrane and translation products are cotranslationally integrated into the membrane. This chain is Large ribosomal subunit protein uL3m (mrpl9), found in Neurospora crassa (strain ATCC 24698 / 74-OR23-1A / CBS 708.71 / DSM 1257 / FGSC 987).